The chain runs to 464 residues: Synaptosomal-associated protein 47 (464 aa).

The tract at residues 20–42 (GRLWDSSGVPQRQKRPGPWRTQT) is disordered. T-SNARE coiled-coil homology domains are found at residues 154 to 216 (VADA…LTEL) and 401 to 463 (TSLP…MKRL).

Belongs to the SVAP1 family. In terms of assembly, forms a complex containing SNAP47, VAMP2 and STX1A. Associates with the BLOC-1 complex. Interacts with BLOC1S6.

It is found in the endomembrane system. Its subcellular location is the cytoplasm. The protein resides in the perinuclear region. In terms of biological role, plays a role in intracellular membrane fusion. This is Synaptosomal-associated protein 47 (SNAP47) from Homo sapiens (Human).